The following is a 140-amino-acid chain: Large ribosomal subunit protein uL16 (140 aa).

It belongs to the universal ribosomal protein uL16 family. As to quaternary structure, part of the 50S ribosomal subunit.

Binds 23S rRNA and is also seen to make contacts with the A and possibly P site tRNAs. The polypeptide is Large ribosomal subunit protein uL16 (Amoebophilus asiaticus (strain 5a2)).